The sequence spans 156 residues: Perlucin-like protein (156 aa).

Residues 1 to 22 (MGKLTVVGILTLFIFYIVAASG) form the signal peptide. 3 disulfides stabilise this stretch: Cys30–Cys41, Cys58–Cys156, and Cys131–Cys147. The C-type lectin domain occupies 37 to 156 (YKTNCYFFSP…CNTDQMGYIC (120 aa)).

Component of the organic matrix of calcified shell layers like nacre and prisms.

The protein resides in the secreted. The sequence is that of Perlucin-like protein from Mytilus galloprovincialis (Mediterranean mussel).